A 198-amino-acid chain; its full sequence is Dephospho-CoA kinase (198 aa).

Positions Arg-4–Trp-198 constitute a DPCK domain. Ala-12–Ser-17 provides a ligand contact to ATP.

It belongs to the CoaE family.

It localises to the cytoplasm. The catalysed reaction is 3'-dephospho-CoA + ATP = ADP + CoA + H(+). The protein operates within cofactor biosynthesis; coenzyme A biosynthesis; CoA from (R)-pantothenate: step 5/5. Its function is as follows. Catalyzes the phosphorylation of the 3'-hydroxyl group of dephosphocoenzyme A to form coenzyme A. In Parasynechococcus marenigrum (strain WH8102), this protein is Dephospho-CoA kinase.